The sequence spans 101 residues: uncharacterized protein (101 aa).

This is an uncharacterized protein from Mycobacterium bovis (strain ATCC BAA-935 / AF2122/97).